We begin with the raw amino-acid sequence, 431 residues long: MTKSAELFAKAQDKIPGGVNSPVRAFAGVGGSPIFVERADGPLIFDADGKAYIDYVGSWGPMILGHNHAAIREAVISAAQRGLSFGAPTETEITMAELVSELVPSMEQVRMVSSGTEATMSAIRLARGYTGRDKIMKFEGCYHGHADSLLVKAGSGALTLGQPSSPGVPADFAKYTLTATFNDLDSVRELFTANKGEIACIIVEPVAGNMNCIPPVEGFHEGLRQICDEEGALLIFDEVMTGFRVAENCAQGYYNIKPDLTTLGKVIGGGMPVGAFGGRKDVMQYIAPTGPVYQAGTLSGNPVAMAAGFACLKVLTEEGNEKRLADTTKHLANGFKELANKHGIPMVVNQVGGMFGFFFTDQETVTSYADVAKCDIERFKRFFHLMLKKGVYLAPSAFEASFTSLAHGPKEIEATLEAADQCFAIIASETK.

The residue at position 265 (K265) is an N6-(pyridoxal phosphate)lysine.

Belongs to the class-III pyridoxal-phosphate-dependent aminotransferase family. HemL subfamily. Homodimer. Pyridoxal 5'-phosphate serves as cofactor.

Its subcellular location is the cytoplasm. It catalyses the reaction (S)-4-amino-5-oxopentanoate = 5-aminolevulinate. It functions in the pathway porphyrin-containing compound metabolism; protoporphyrin-IX biosynthesis; 5-aminolevulinate from L-glutamyl-tRNA(Glu): step 2/2. The polypeptide is Glutamate-1-semialdehyde 2,1-aminomutase (Aliivibrio fischeri (strain MJ11) (Vibrio fischeri)).